The following is a 214-amino-acid chain: Probable transaldolase (214 aa).

The active-site Schiff-base intermediate with substrate is Lys83.

Belongs to the transaldolase family. Type 3B subfamily.

It localises to the cytoplasm. The catalysed reaction is D-sedoheptulose 7-phosphate + D-glyceraldehyde 3-phosphate = D-erythrose 4-phosphate + beta-D-fructose 6-phosphate. The protein operates within carbohydrate degradation; pentose phosphate pathway; D-glyceraldehyde 3-phosphate and beta-D-fructose 6-phosphate from D-ribose 5-phosphate and D-xylulose 5-phosphate (non-oxidative stage): step 2/3. Functionally, transaldolase is important for the balance of metabolites in the pentose-phosphate pathway. The polypeptide is Probable transaldolase (Leptospira borgpetersenii serovar Hardjo-bovis (strain JB197)).